Reading from the N-terminus, the 475-residue chain is tRNA-2-methylthio-N(6)-dimethylallyladenosine synthase (475 aa).

The region spanning 2–119 (AKLHITTWGC…LPEMINKIRG (118 aa)) is the MTTase N-terminal domain. 6 residues coordinate [4Fe-4S] cluster: Cys-11, Cys-48, Cys-82, Cys-156, Cys-160, and Cys-163. Residues 142–374 (RAEGPTAFVS…QQRINHQAMQ (233 aa)) form the Radical SAM core domain. Residues 377–440 (RAMLGTEQRV…TNSLRGDVVR (64 aa)) enclose the TRAM domain.

The protein belongs to the methylthiotransferase family. MiaB subfamily. Monomer. The cofactor is [4Fe-4S] cluster.

The protein resides in the cytoplasm. It catalyses the reaction N(6)-dimethylallyladenosine(37) in tRNA + (sulfur carrier)-SH + AH2 + 2 S-adenosyl-L-methionine = 2-methylsulfanyl-N(6)-dimethylallyladenosine(37) in tRNA + (sulfur carrier)-H + 5'-deoxyadenosine + L-methionine + A + S-adenosyl-L-homocysteine + 2 H(+). Functionally, catalyzes the methylthiolation of N6-(dimethylallyl)adenosine (i(6)A), leading to the formation of 2-methylthio-N6-(dimethylallyl)adenosine (ms(2)i(6)A) at position 37 in tRNAs that read codons beginning with uridine. In Actinobacillus pleuropneumoniae serotype 5b (strain L20), this protein is tRNA-2-methylthio-N(6)-dimethylallyladenosine synthase.